A 468-amino-acid polypeptide reads, in one-letter code: Methylenetetrahydrofolate--tRNA-(uracil-5-)-methyltransferase TrmFO (468 aa).

10-15 provides a ligand contact to FAD; the sequence is GGGLAG.

This sequence belongs to the MnmG family. TrmFO subfamily. Requires FAD as cofactor.

Its subcellular location is the cytoplasm. It catalyses the reaction uridine(54) in tRNA + (6R)-5,10-methylene-5,6,7,8-tetrahydrofolate + NADH + H(+) = 5-methyluridine(54) in tRNA + (6S)-5,6,7,8-tetrahydrofolate + NAD(+). The catalysed reaction is uridine(54) in tRNA + (6R)-5,10-methylene-5,6,7,8-tetrahydrofolate + NADPH + H(+) = 5-methyluridine(54) in tRNA + (6S)-5,6,7,8-tetrahydrofolate + NADP(+). Catalyzes the folate-dependent formation of 5-methyl-uridine at position 54 (M-5-U54) in all tRNAs. The sequence is that of Methylenetetrahydrofolate--tRNA-(uracil-5-)-methyltransferase TrmFO from Chelativorans sp. (strain BNC1).